Consider the following 463-residue polypeptide: Glutamate--tRNA ligase 1 (463 aa).

The short motif at 10 to 20 is the 'HIGH' region element; the sequence is PSPTGYLHIGG. Positions 238-242 match the 'KMSKS' region motif; the sequence is KLSKR. An ATP-binding site is contributed by Lys-241.

Belongs to the class-I aminoacyl-tRNA synthetase family. Glutamate--tRNA ligase type 1 subfamily. In terms of assembly, monomer.

It localises to the cytoplasm. The catalysed reaction is tRNA(Glu) + L-glutamate + ATP = L-glutamyl-tRNA(Glu) + AMP + diphosphate. Catalyzes the attachment of glutamate to tRNA(Glu) in a two-step reaction: glutamate is first activated by ATP to form Glu-AMP and then transferred to the acceptor end of tRNA(Glu). This chain is Glutamate--tRNA ligase 1, found in Helicobacter pylori (strain J99 / ATCC 700824) (Campylobacter pylori J99).